Consider the following 524-residue polypeptide: Secologanin synthase 1 (524 aa).

Over 1–11 the chain is Lumenal; it reads MEMDMDTIRKA. Residues 12 to 32 form a helical membrane-spanning segment; it reads IAATIFALVMAWAWRVLDWAW. Residues 33–524 are Cytoplasmic-facing; sequence FTPKRIEKRL…SHVIYKKLES (492 aa). Cysteine 470 is a heme binding site.

Belongs to the cytochrome P450 family. It depends on heme as a cofactor. In terms of tissue distribution, upper and lower leaf epidermis.

Its subcellular location is the endoplasmic reticulum membrane. The enzyme catalyses loganin + reduced [NADPH--hemoprotein reductase] + O2 = secologanin + oxidized [NADPH--hemoprotein reductase] + 2 H2O + H(+). It catalyses the reaction secologanin + reduced [NADPH--hemoprotein reductase] + O2 = secoxyloganin + oxidized [NADPH--hemoprotein reductase] + H2O + 2 H(+). It functions in the pathway alkaloid biosynthesis; secologanin biosynthesis. Component of the seco-iridoid and derivatives monoterpenoid indole alkaloids (MIAs, e.g. secologanin) biosynthesis pathway. Catalyzes the conversion of loganin into secologanin. Catalyzes the conversion of secologanin into secoxyloganin. This is Secologanin synthase 1 from Catharanthus roseus (Madagascar periwinkle).